Here is a 417-residue protein sequence, read N- to C-terminus: Probable serine incorporator (417 aa).

The next 10 membrane-spanning stretches (helical) occupy residues 25–45 (VYVVFFLLVSIVAYILSYWTF), 69–89 (VVYRLTFGLALYHILLGLVMI), 104–124 (GYWPLKILLLGVLIFVSFFIP), 131–151 (YTWISIFSAAIFIFIQLVLLI), 180–200 (CVLSFGSIALAVAGTVLMLVF), 208–228 (INQFYIVFNLGICLIVGVLSI), 239–259 (SGLFQSGVVMLYCTYLIYSAI), 276–296 (KESTIIIGAVFTIISVCYSAF), 339–359 (FFHFTFACGAMYLSALLTNWA), and 391–411 (VVSSWVVVLLYLWTLIGPILL).

Belongs to the TDE1 family.

The protein resides in the endoplasmic reticulum membrane. In terms of biological role, enhances the incorporation of serine into phosphatidylserine and sphingolipids. The protein is Probable serine incorporator (serinc) of Dictyostelium discoideum (Social amoeba).